The primary structure comprises 87 residues: Putative defensin-like protein 317 (87 aa).

The first 24 residues, 1–24, serve as a signal peptide directing secretion; it reads MKSFLVAFLIVLVFFCVEMKIGNG. Cystine bridges form between Cys-38/Cys-71, Cys-47/Cys-80, and Cys-56/Cys-82.

It belongs to the DEFL family.

It is found in the secreted. The chain is Putative defensin-like protein 317 from Arabidopsis thaliana (Mouse-ear cress).